A 244-amino-acid polypeptide reads, in one-letter code: Geranylgeranylglyceryl phosphate synthase (244 aa).

Positions 21 and 50 each coordinate Mg(2+). Residues 168–174 (YLEAGSG), 200–201 (GG), and 222–223 (GN) contribute to the sn-glycerol 1-phosphate site.

The protein belongs to the GGGP/HepGP synthase family. Group II subfamily. Mg(2+) serves as cofactor.

The protein resides in the cytoplasm. The enzyme catalyses sn-glycerol 1-phosphate + (2E,6E,10E)-geranylgeranyl diphosphate = sn-3-O-(geranylgeranyl)glycerol 1-phosphate + diphosphate. It participates in membrane lipid metabolism; glycerophospholipid metabolism. Prenyltransferase that catalyzes the transfer of the geranylgeranyl moiety of geranylgeranyl diphosphate (GGPP) to the C3 hydroxyl of sn-glycerol-1-phosphate (G1P). This reaction is the first ether-bond-formation step in the biosynthesis of archaeal membrane lipids. The protein is Geranylgeranylglyceryl phosphate synthase of Sulfurisphaera tokodaii (strain DSM 16993 / JCM 10545 / NBRC 100140 / 7) (Sulfolobus tokodaii).